Reading from the N-terminus, the 287-residue chain is Phosphatidylserine decarboxylase proenzyme (287 aa).

Residues aspartate 90, histidine 147, and serine 252 each act as charge relay system; for autoendoproteolytic cleavage activity in the active site. The active-site Schiff-base intermediate with substrate; via pyruvic acid; for decarboxylase activity is serine 252. Serine 252 bears the Pyruvic acid (Ser); by autocatalysis mark.

This sequence belongs to the phosphatidylserine decarboxylase family. PSD-B subfamily. Prokaryotic type I sub-subfamily. As to quaternary structure, heterodimer of a large membrane-associated beta subunit and a small pyruvoyl-containing alpha subunit. Requires pyruvate as cofactor. In terms of processing, is synthesized initially as an inactive proenzyme. Formation of the active enzyme involves a self-maturation process in which the active site pyruvoyl group is generated from an internal serine residue via an autocatalytic post-translational modification. Two non-identical subunits are generated from the proenzyme in this reaction, and the pyruvate is formed at the N-terminus of the alpha chain, which is derived from the carboxyl end of the proenzyme. The autoendoproteolytic cleavage occurs by a canonical serine protease mechanism, in which the side chain hydroxyl group of the serine supplies its oxygen atom to form the C-terminus of the beta chain, while the remainder of the serine residue undergoes an oxidative deamination to produce ammonia and the pyruvoyl prosthetic group on the alpha chain. During this reaction, the Ser that is part of the protease active site of the proenzyme becomes the pyruvoyl prosthetic group, which constitutes an essential element of the active site of the mature decarboxylase.

It is found in the cell membrane. The enzyme catalyses a 1,2-diacyl-sn-glycero-3-phospho-L-serine + H(+) = a 1,2-diacyl-sn-glycero-3-phosphoethanolamine + CO2. It participates in phospholipid metabolism; phosphatidylethanolamine biosynthesis; phosphatidylethanolamine from CDP-diacylglycerol: step 2/2. Functionally, catalyzes the formation of phosphatidylethanolamine (PtdEtn) from phosphatidylserine (PtdSer). This chain is Phosphatidylserine decarboxylase proenzyme, found in Pseudomonas putida (strain GB-1).